The primary structure comprises 236 residues: MTNPPSTDYSRAGAGLRIGVLALQGDFREHLRAAEATGATGIGIRRPSELDGIDGLIIPGGESTAIDKLARAFELADPLRKLIAEGLPVYGSCAGMILLADEIADPATDLAGNPQQTFGGLDITVRRNAFGRQRESFEIDLEFKGLGFSDTGSGVAPVHAVFIRGPWVERVGPGVEVLAQVEPADPAHASHAAALQGTARIVAVRSGHLLATSFHPEVTGEKRVHELFIRMIRGEA.

61–63 contributes to the L-glutamine binding site; that stretch reads GES. The active-site Nucleophile is Cys-93. Residues Arg-127 and 163 to 164 contribute to the L-glutamine site; that span reads IR. Active-site charge relay system residues include His-215 and Glu-217.

This sequence belongs to the glutaminase PdxT/SNO family. In terms of assembly, in the presence of PdxS, forms a dodecamer of heterodimers. Only shows activity in the heterodimer.

The catalysed reaction is aldehydo-D-ribose 5-phosphate + D-glyceraldehyde 3-phosphate + L-glutamine = pyridoxal 5'-phosphate + L-glutamate + phosphate + 3 H2O + H(+). The enzyme catalyses L-glutamine + H2O = L-glutamate + NH4(+). The protein operates within cofactor biosynthesis; pyridoxal 5'-phosphate biosynthesis. Its function is as follows. Catalyzes the hydrolysis of glutamine to glutamate and ammonia as part of the biosynthesis of pyridoxal 5'-phosphate. The resulting ammonia molecule is channeled to the active site of PdxS. In Arthrobacter sp. (strain FB24), this protein is Pyridoxal 5'-phosphate synthase subunit PdxT.